We begin with the raw amino-acid sequence, 451 residues long: Trigger factor (451 aa).

Residues 165 to 250 form the PPIase FKBP-type domain; the sequence is DDKLTIDFEG…LHQIQAREAL (86 aa).

The protein belongs to the FKBP-type PPIase family. Tig subfamily.

It is found in the cytoplasm. The enzyme catalyses [protein]-peptidylproline (omega=180) = [protein]-peptidylproline (omega=0). Functionally, involved in protein export. Acts as a chaperone by maintaining the newly synthesized protein in an open conformation. Functions as a peptidyl-prolyl cis-trans isomerase. This chain is Trigger factor, found in Helicobacter pylori (strain G27).